Consider the following 139-residue polypeptide: Nucleoside diphosphate kinase (139 aa).

ATP-binding residues include Lys-11, Phe-59, Arg-87, Thr-93, Arg-104, and Asn-114. His-117 serves as the catalytic Pros-phosphohistidine intermediate.

This sequence belongs to the NDK family. In terms of assembly, homotetramer. The cofactor is Mg(2+).

It localises to the cytoplasm. The enzyme catalyses a 2'-deoxyribonucleoside 5'-diphosphate + ATP = a 2'-deoxyribonucleoside 5'-triphosphate + ADP. It catalyses the reaction a ribonucleoside 5'-diphosphate + ATP = a ribonucleoside 5'-triphosphate + ADP. Its function is as follows. Major role in the synthesis of nucleoside triphosphates other than ATP. The ATP gamma phosphate is transferred to the NDP beta phosphate via a ping-pong mechanism, using a phosphorylated active-site intermediate. The protein is Nucleoside diphosphate kinase of Coxiella burnetii (strain CbuK_Q154) (Coxiella burnetii (strain Q154)).